The sequence spans 856 residues: Probable alpha,alpha-trehalose-phosphate synthase [UDP-forming] 8 (856 aa).

Serine 5 is modified (phosphoserine). Threonine 32 is modified (phosphothreonine). Residues 57 to 541 form a glycosyltransferase region; sequence ERKIIVANML…AKSFMQDLER (485 aa).

The protein in the N-terminal section; belongs to the glycosyltransferase 20 family. In the C-terminal section; belongs to the trehalose phosphatase family. As to expression, expressed in leaves, roots, stems and flowers.

It catalyses the reaction D-glucose 6-phosphate + UDP-alpha-D-glucose = alpha,alpha-trehalose 6-phosphate + UDP + H(+). This Arabidopsis thaliana (Mouse-ear cress) protein is Probable alpha,alpha-trehalose-phosphate synthase [UDP-forming] 8 (TPS8).